Here is a 262-residue protein sequence, read N- to C-terminus: Phosphatidylserine decarboxylase proenzyme (262 aa).

Catalysis depends on charge relay system; for autoendoproteolytic cleavage activity residues Asp86, His142, and Ser226. The Schiff-base intermediate with substrate; via pyruvic acid; for decarboxylase activity role is filled by Ser226. Residue Ser226 is modified to Pyruvic acid (Ser); by autocatalysis.

Belongs to the phosphatidylserine decarboxylase family. PSD-B subfamily. Prokaryotic type I sub-subfamily. Heterodimer of a large membrane-associated beta subunit and a small pyruvoyl-containing alpha subunit. Pyruvate serves as cofactor. Post-translationally, is synthesized initially as an inactive proenzyme. Formation of the active enzyme involves a self-maturation process in which the active site pyruvoyl group is generated from an internal serine residue via an autocatalytic post-translational modification. Two non-identical subunits are generated from the proenzyme in this reaction, and the pyruvate is formed at the N-terminus of the alpha chain, which is derived from the carboxyl end of the proenzyme. The autoendoproteolytic cleavage occurs by a canonical serine protease mechanism, in which the side chain hydroxyl group of the serine supplies its oxygen atom to form the C-terminus of the beta chain, while the remainder of the serine residue undergoes an oxidative deamination to produce ammonia and the pyruvoyl prosthetic group on the alpha chain. During this reaction, the Ser that is part of the protease active site of the proenzyme becomes the pyruvoyl prosthetic group, which constitutes an essential element of the active site of the mature decarboxylase.

The protein localises to the cell membrane. It carries out the reaction a 1,2-diacyl-sn-glycero-3-phospho-L-serine + H(+) = a 1,2-diacyl-sn-glycero-3-phosphoethanolamine + CO2. It participates in phospholipid metabolism; phosphatidylethanolamine biosynthesis; phosphatidylethanolamine from CDP-diacylglycerol: step 2/2. Catalyzes the formation of phosphatidylethanolamine (PtdEtn) from phosphatidylserine (PtdSer). The protein is Phosphatidylserine decarboxylase proenzyme of Bacillus thuringiensis (strain Al Hakam).